The following is a 576-amino-acid chain: G protein-coupled receptor kinase 6 (576 aa).

The segment at Met1–Thr185 is N-terminal. Residues Tyr53–Leu171 enclose the RGS domain. The region spanning Phe186–Phe448 is the Protein kinase domain. ATP contacts are provided by residues Leu192 to Val200, Lys215, and Thr264 to Asp270. The active-site Proton acceptor is Asp311. ATP is bound at residue Glu315–Leu318. The AGC-kinase C-terminal domain occupies Lys449 to Glu514. Residue Ser484 is modified to Phosphoserine. Thr485 carries the post-translational modification Phosphothreonine. S-palmitoyl cysteine attachment occurs at residues Cys561, Cys562, and Cys565. Phosphoserine is present on residues Ser566 and Ser568.

It belongs to the protein kinase superfamily. AGC Ser/Thr protein kinase family. GPRK subfamily. In terms of assembly, interacts with GIT1. Expressed in the brain in striatal neurons.

Its subcellular location is the membrane. The catalysed reaction is [G-protein-coupled receptor] + ATP = [G-protein-coupled receptor]-phosphate + ADP + H(+). Specifically phosphorylates the activated forms of G protein-coupled receptors. Such receptor phosphorylation initiates beta-arrestin-mediated receptor desensitization, internalization, and signaling events leading to their desensitization. Seems to be involved in the desensitization of D2-like dopamine receptors in striatum and chemokine receptor CXCR4 which is critical for CXCL12-induced cell chemotaxis. Phosphorylates rhodopsin (RHO) (in vitro) and a non G-protein-coupled receptor, LRP6 during Wnt signaling (in vitro). The protein is G protein-coupled receptor kinase 6 (Grk6) of Mus musculus (Mouse).